A 206-amino-acid polypeptide reads, in one-letter code: MTYIVGLTGGIGSGKSTIAHLFMALGVPVIDADVVARDIVTKGSELLSKIVDYFGEHILCENGELNRAKLRERIFRHPEDKVWLNQLLHPAIREEMLRQLQIQTYPYVLWVVPLLIENNLTAFCQRVLVVDVEPETQIQRAMQRDNNSIELIQHIMASQVDRQTRLQFADDVIQNDADLKGNLPVLKQKVLELHHQYLQLANAQNA.

Residues 4–204 (IVGLTGGIGS…HQYLQLANAQ (201 aa)) enclose the DPCK domain. 12-17 (GSGKST) is a binding site for ATP.

This sequence belongs to the CoaE family.

The protein resides in the cytoplasm. The enzyme catalyses 3'-dephospho-CoA + ATP = ADP + CoA + H(+). Its pathway is cofactor biosynthesis; coenzyme A biosynthesis; CoA from (R)-pantothenate: step 5/5. Its function is as follows. Catalyzes the phosphorylation of the 3'-hydroxyl group of dephosphocoenzyme A to form coenzyme A. In Pasteurella multocida (strain Pm70), this protein is Dephospho-CoA kinase.